A 434-amino-acid chain; its full sequence is MLDIQLFRKDIDAVAQRLATRGFQLDVAAFQALEAERKQLQTQTEELQARRNSLSKQIGMLKGKGEDASAVMAEVGGIGDTLKASAARLDEIQAHLGELMLSIPNLPHESVPVGNDETQNVEVRRVGEPRQFDFAVRDHVDVGEKLGLDFDTAVKVTGSRFSMLRGGMARLHRALVQLMLDTHTQEHGYTEMYVPYIVNAASMRGTGQLPKFEEDLFKVPRKVGSEEGERIENFYLIPTAEVPLTNIVRDAIVAGDKLPLRFVAHTPCFRSEAGSYGKDTRGMIRQHQFDKVELVQVVPADQSFDALEQLTGHAEAILKKLELPFRTIVLCTGDMGFGSTKTYDLEVWIPAQNTYREISSCSNMGDFQARRMQARMRTGQGKPELVHTLNGSGLAVGRTLVAILENYQNADGSVTVPAALQPYMGGTTRLEPEL.

Residue 239–241 (TAE) participates in L-serine binding. Residue 270-272 (RSE) coordinates ATP. Glu293 contacts L-serine. 357-360 (EISS) serves as a coordination point for ATP. L-serine is bound at residue Ser392.

The protein belongs to the class-II aminoacyl-tRNA synthetase family. Type-1 seryl-tRNA synthetase subfamily. As to quaternary structure, homodimer. The tRNA molecule binds across the dimer.

It is found in the cytoplasm. It carries out the reaction tRNA(Ser) + L-serine + ATP = L-seryl-tRNA(Ser) + AMP + diphosphate + H(+). It catalyses the reaction tRNA(Sec) + L-serine + ATP = L-seryl-tRNA(Sec) + AMP + diphosphate + H(+). Its pathway is aminoacyl-tRNA biosynthesis; selenocysteinyl-tRNA(Sec) biosynthesis; L-seryl-tRNA(Sec) from L-serine and tRNA(Sec): step 1/1. In terms of biological role, catalyzes the attachment of serine to tRNA(Ser). Is also able to aminoacylate tRNA(Sec) with serine, to form the misacylated tRNA L-seryl-tRNA(Sec), which will be further converted into selenocysteinyl-tRNA(Sec). The chain is Serine--tRNA ligase from Cupriavidus taiwanensis (strain DSM 17343 / BCRC 17206 / CCUG 44338 / CIP 107171 / LMG 19424 / R1) (Ralstonia taiwanensis (strain LMG 19424)).